Consider the following 255-residue polypeptide: Glutamate racemase (255 aa).

Substrate-binding positions include 7–8 (DS) and 39–40 (YG). Cysteine 70 (proton donor/acceptor) is an active-site residue. 71–72 (NT) is a binding site for substrate. The active-site Proton donor/acceptor is cysteine 181. Position 182 to 183 (182 to 183 (TH)) interacts with substrate.

Belongs to the aspartate/glutamate racemases family.

The enzyme catalyses L-glutamate = D-glutamate. The protein operates within cell wall biogenesis; peptidoglycan biosynthesis. Functionally, provides the (R)-glutamate required for cell wall biosynthesis. This is Glutamate racemase from Helicobacter pylori (strain HPAG1).